The primary structure comprises 171 residues: Ribosome-binding factor A (171 aa).

A compositionally biased stretch (low complexity) spans 120–132 (AALAAAAQPAGDP). The interval 120–171 (AALAAAAQPAGDPDPYKKPVDHTDDWDEDDEDDRDGDDAVDALDAAADVPRL) is disordered. Over residues 133-142 (DPYKKPVDHT) the composition is skewed to basic and acidic residues. A compositionally biased stretch (acidic residues) spans 143 to 160 (DDWDEDDEDDRDGDDAVD). Residues 161-171 (ALDAAADVPRL) are compositionally biased toward low complexity.

It belongs to the RbfA family. Monomer. Binds 30S ribosomal subunits, but not 50S ribosomal subunits or 70S ribosomes.

The protein localises to the cytoplasm. One of several proteins that assist in the late maturation steps of the functional core of the 30S ribosomal subunit. Associates with free 30S ribosomal subunits (but not with 30S subunits that are part of 70S ribosomes or polysomes). Required for efficient processing of 16S rRNA. May interact with the 5'-terminal helix region of 16S rRNA. In Kineococcus radiotolerans (strain ATCC BAA-149 / DSM 14245 / SRS30216), this protein is Ribosome-binding factor A.